The primary structure comprises 338 residues: Phosphoribosylformylglycinamidine cyclo-ligase (338 aa).

The protein belongs to the AIR synthase family.

Its subcellular location is the cytoplasm. The catalysed reaction is 2-formamido-N(1)-(5-O-phospho-beta-D-ribosyl)acetamidine + ATP = 5-amino-1-(5-phospho-beta-D-ribosyl)imidazole + ADP + phosphate + H(+). It participates in purine metabolism; IMP biosynthesis via de novo pathway; 5-amino-1-(5-phospho-D-ribosyl)imidazole from N(2)-formyl-N(1)-(5-phospho-D-ribosyl)glycinamide: step 2/2. This is Phosphoribosylformylglycinamidine cyclo-ligase from Thermoplasma volcanium (strain ATCC 51530 / DSM 4299 / JCM 9571 / NBRC 15438 / GSS1).